Here is a 341-residue protein sequence, read N- to C-terminus: S-adenosylmethionine:tRNA ribosyltransferase-isomerase (341 aa).

Belongs to the QueA family. In terms of assembly, monomer.

It localises to the cytoplasm. The enzyme catalyses 7-aminomethyl-7-carbaguanosine(34) in tRNA + S-adenosyl-L-methionine = epoxyqueuosine(34) in tRNA + adenine + L-methionine + 2 H(+). It participates in tRNA modification; tRNA-queuosine biosynthesis. Its function is as follows. Transfers and isomerizes the ribose moiety from AdoMet to the 7-aminomethyl group of 7-deazaguanine (preQ1-tRNA) to give epoxyqueuosine (oQ-tRNA). This chain is S-adenosylmethionine:tRNA ribosyltransferase-isomerase, found in Herminiimonas arsenicoxydans.